The chain runs to 360 residues: Homeobox protein ceh-60 (360 aa).

Residues 1-82 (MDNLIKQLQM…ENPTFPLEEV (82 aa)) are PBC-A. Positions 1-179 (MDNLIKQLQM…ILVLRREIEQ (179 aa)) constitute a PBC domain. Residues 85–179 (EKDEEWQPLE…ILVLRREIEQ (95 aa)) are PBC-B. The homeobox DNA-binding region spans 180-242 (QGRKRRNFDK…NQRIRTKQQA (63 aa)).

The protein belongs to the TALE/PBX homeobox family. In terms of assembly, forms a heterodimer with homeobox unc-62. Interacts with pqm-1.

The protein resides in the nucleus. Probable transcription regulator which binds to DNA, repressing genes involved in longevity and stress, while activating genes involved in reproduction, such as the vitellogenins. Associates with homeobox unc-62 to regulate gene expression, including repression of genes involved in innate immunity. Required for intestinal expression of vitellogenin genes. Negatively modulates longevity, probably independently of effects on vitellogenesis. Involved in lipid homeostasis, contributing to the reallocation of intestinal lipids to the germline and to the formation of the cuticle. Associates with transcriptional regulator pqm-1 at the daf-16 associated element within the promoters of stress-responsive genes to regulate expression. This is Homeobox protein ceh-60 from Caenorhabditis elegans.